Consider the following 245-residue polypeptide: Proteasome subunit alpha type-7-1B (245 aa).

The protein belongs to the peptidase T1A family. In terms of assembly, the 26S proteasome consists of a 20S proteasome core and two 19S regulatory subunits. The 20S proteasome core is composed of 28 subunits that are arranged in four stacked rings, resulting in a barrel-shaped structure. The two end rings are each formed by seven alpha subunits, and the two central rings are each formed by seven beta subunits. The catalytic chamber with the active sites is on the inside of the barrel. In terms of tissue distribution, testis specific.

Its subcellular location is the cytoplasm. It localises to the nucleus. The proteasome is a multicatalytic proteinase complex which is characterized by its ability to cleave peptides with Arg, Phe, Tyr, Leu, and Glu adjacent to the leaving group at neutral or slightly basic pH. The proteasome has an ATP-dependent proteolytic activity. This chain is Proteasome subunit alpha type-7-1B (Pros28.1B), found in Drosophila virilis (Fruit fly).